The following is a 2158-amino-acid chain: Non-reducing polyketide synthase Preu8 (2158 aa).

The segment at Leu-4–His-241 is N-terminal acylcarrier protein transacylase domain (SAT). The 433-residue stretch at Asn-369–Asp-801 folds into the Ketosynthase family 3 (KS3) domain. Active-site for beta-ketoacyl synthase activity residues include Cys-541, His-676, and His-719. Positions Phe-900–Ala-1215 are malonyl-CoA:ACP transacylase (MAT) domain. The active-site For acyl/malonyl transferase activity is the Ser-989. The product template (PT) domain stretch occupies residues Ser-1285–Pro-1603. The tract at residues Gln-1287–Gln-1423 is N-terminal hotdog fold. One can recognise a PKS/mFAS DH domain in the interval Gln-1287–Asn-1598. His-1319 serves as the catalytic Proton acceptor; for dehydratase activity. Residues Ala-1451–Asn-1598 form a C-terminal hotdog fold region. Residue Asp-1511 is the Proton donor; for dehydratase activity of the active site. Low complexity predominate over residues Lys-1619–Ser-1639. Positions Lys-1619–Thr-1654 are disordered. The region spanning Asp-1651–Asp-1725 is the Carrier 1 domain. Residue Ser-1685 is modified to O-(pantetheine 4'-phosphoryl)serine. A disordered region spans residues Gln-1723–Ser-1779. Over residues Asp-1731–Asp-1740 the composition is skewed to acidic residues. Residues Ser-1743–Ser-1770 show a composition bias toward polar residues. One can recognise a Carrier 2 domain in the interval Ser-1779–Pro-1853. Ser-1813 is subject to O-(pantetheine 4'-phosphoryl)serine. A disordered region spans residues Asn-1847–Gln-1879. Residues Glu-1860 to Lys-1876 are compositionally biased toward low complexity. Residues Ser-1894–His-2144 are thioesterase (TE) domain.

The cofactor is pantetheine 4'-phosphate.

In terms of biological role, non-reducing polyketide synthase; part of a gene cluster that mediates the biosynthesis of a yet unidentified natural product. The chain is Non-reducing polyketide synthase Preu8 from Preussia isomera (Coprophilous fungus).